We begin with the raw amino-acid sequence, 610 residues long: Elongation factor 4 (610 aa).

Residues 13 to 195 form the tr-type G domain; the sequence is SHIRNFSIVA…AIVHKLPAPK (183 aa). Residues 25–30 and 142–145 contribute to the GTP site; these read DHGKST and NKID.

It belongs to the TRAFAC class translation factor GTPase superfamily. Classic translation factor GTPase family. LepA subfamily.

It localises to the cell inner membrane. The enzyme catalyses GTP + H2O = GDP + phosphate + H(+). Required for accurate and efficient protein synthesis under certain stress conditions. May act as a fidelity factor of the translation reaction, by catalyzing a one-codon backward translocation of tRNAs on improperly translocated ribosomes. Back-translocation proceeds from a post-translocation (POST) complex to a pre-translocation (PRE) complex, thus giving elongation factor G a second chance to translocate the tRNAs correctly. Binds to ribosomes in a GTP-dependent manner. The sequence is that of Elongation factor 4 from Rhizobium johnstonii (strain DSM 114642 / LMG 32736 / 3841) (Rhizobium leguminosarum bv. viciae).